Here is a 753-residue protein sequence, read N- to C-terminus: Probable dipeptidyl peptidase 4 (753 aa).

The N-terminal stretch at Met1 to Ala18 is a signal peptide. Residues Asn84, Asn114, and Asn222 are each glycosylated (N-linked (GlcNAc...) asparagine). Catalysis depends on charge relay system residues Ser616, Asp668, and His703.

Belongs to the peptidase S9B family.

Its subcellular location is the secreted. The enzyme catalyses Release of an N-terminal dipeptide, Xaa-Yaa-|-Zaa-, from a polypeptide, preferentially when Yaa is Pro, provided Zaa is neither Pro nor hydroxyproline.. Functionally, extracellular dipeptidyl-peptidase which removes N-terminal dipeptides sequentially from polypeptides having unsubstituted N-termini provided that the penultimate residue is proline. Contributes to pathogenicity. In Trichophyton verrucosum (strain HKI 0517), this protein is Probable dipeptidyl peptidase 4 (DPP4).